The following is a 250-amino-acid chain: Corrinoid adenosyltransferase MMAB (250 aa).

Residues 1 to 32 (MAVCGLGSRLGLGSRLGLRGCFGAARLLYPRF) constitute a mitochondrion transit peptide. The segment at 34–59 (SRGPQGVEDGDRPQPSSKTPRIPKIY) is disordered. ATP is bound by residues 60 to 63 (TKTG), 68 to 69 (SS), and Lys-78. Ser-134 carries the post-translational modification Phosphoserine. 190–194 (RRAER) contributes to the ATP binding site. Residue Lys-211 is modified to N6-succinyllysine. Asn-214 serves as a coordination point for ATP. Lys-230 carries the N6-acetyllysine; alternate modification. Lys-230 carries the N6-succinyllysine; alternate modification.

It belongs to the Cob(I)alamin adenosyltransferase family. As to quaternary structure, homotrimer. In terms of tissue distribution, expressed in liver and skeletal muscle.

The protein resides in the mitochondrion. It catalyses the reaction cob(I)alamin-[corrinoid adenosyltransferase] + ATP = apo-[corrinoid adenosyltransferase] + adenosylcob(III)alamin + triphosphate. Its function is as follows. Converts cob(I)alamin to adenosylcobalamin (adenosylcob(III)alamin), a coenzyme for methylmalonyl-CoA mutase, therefore participates in the final step of the vitamin B12 conversion. Generates adenosylcobalamin (AdoCbl) and directly delivers the cofactor to MUT in a transfer that is stimulated by ATP-binding to MMAB and gated by MMAA. The chain is Corrinoid adenosyltransferase MMAB from Homo sapiens (Human).